The sequence spans 126 residues: Small ribosomal subunit protein uS13 (126 aa).

Positions 98-126 (VRGQSTKNNARTRKGKRKTVANKKKAAKK) are disordered. The segment covering 107–126 (ARTRKGKRKTVANKKKAAKK) has biased composition (basic residues).

It belongs to the universal ribosomal protein uS13 family. Part of the 30S ribosomal subunit. Forms a loose heterodimer with protein S19. Forms two bridges to the 50S subunit in the 70S ribosome.

Functionally, located at the top of the head of the 30S subunit, it contacts several helices of the 16S rRNA. In the 70S ribosome it contacts the 23S rRNA (bridge B1a) and protein L5 of the 50S subunit (bridge B1b), connecting the 2 subunits; these bridges are implicated in subunit movement. Contacts the tRNAs in the A and P-sites. The protein is Small ribosomal subunit protein uS13 of Amoebophilus asiaticus (strain 5a2).